A 305-amino-acid polypeptide reads, in one-letter code: Taste receptor type 2 member 13 (305 aa).

Residues 1 to 7 (MGSSLYD) lie on the Extracellular side of the membrane. A helical membrane pass occupies residues 8–28 (ILTIVMIAEFIFGNVTNGFIV). Residues 29–42 (LTNCIAWLSKRTLS) are Cytoplasmic-facing. A helical transmembrane segment spans residues 43-63 (FIGWIQLFLAISRVVLIWEML). The Extracellular segment spans residues 64-88 (LAWLKYMKYSFSYLAGTELRVMMLT). Residues 89 to 109 (WVVSNHFSLWLATILSIFYLL) traverse the membrane as a helical segment. Topologically, residues 110–128 (KIASFSRPVFLYLKWRVKK) are cytoplasmic. The helical transmembrane segment at 129 to 149 (VLLLILLGNLIFLMFNILQIN) threads the bilayer. Residues 150 to 182 (THIEDWMDQYKRNITWDSRVNEFVGFSNLVLLE) lie on the Extracellular side of the membrane. An N-linked (GlcNAc...) asparagine glycan is attached at Asn162. The helical transmembrane segment at 183–203 (MIMFSVTPFTVALVSFILLIF) threads the bilayer. Residues 204 to 232 (SLWKHLQKMHLSSRGERDPSTKAHVNALR) are Cytoplasmic-facing. Residues 233 to 253 (IMVSFLLLYATYFISFFISLI) traverse the membrane as a helical segment. Over 254 to 262 (PMAHKKGLD) the chain is Extracellular. The chain crosses the membrane as a helical span at residues 263 to 283 (LMFSLTVGLFYPSSHSFILIL). Topologically, residues 284 to 305 (GHSNLRHSSCLVITYLRCKEKD) are cytoplasmic.

This sequence belongs to the G-protein coupled receptor T2R family. As to expression, expressed in subsets of taste receptor cells of the tongue and palate epithelium and exclusively in gustducin-positive cells. Expressed in 15% taste bud cells in circumvallate and foliate papillae but only in 2% in fungiform papillae. Expressed in the duodenum, antrum and fundus (part of the stomach).

Its subcellular location is the membrane. In terms of biological role, receptor that may play a role in the perception of bitterness and is gustducin-linked. May play a role in sensing the chemical composition of the gastrointestinal content. The activity of this receptor may stimulate alpha gustducin, mediate PLC-beta-2 activation and lead to the gating of TRPM5. The sequence is that of Taste receptor type 2 member 13 (Tas2r13) from Rattus norvegicus (Rat).